The primary structure comprises 205 residues: Holliday junction branch migration complex subunit RuvA (205 aa).

A domain I region spans residues 1-65 (MIAKLKGILD…EDRIHLFGFL (65 aa)). A domain II region spans residues 66–144 (DNTEKVAFNM…NINTIANNTS (79 aa)). Positions 145–153 (LATLSTDSN) are flexible linker. The interval 154–205 (THDNILSDAITALIALGISRAEATQILSDIYALSPSISVNELVRTALQRRAK) is domain III.

It belongs to the RuvA family. In terms of assembly, homotetramer. Forms an RuvA(8)-RuvB(12)-Holliday junction (HJ) complex. HJ DNA is sandwiched between 2 RuvA tetramers; dsDNA enters through RuvA and exits via RuvB. An RuvB hexamer assembles on each DNA strand where it exits the tetramer. Each RuvB hexamer is contacted by two RuvA subunits (via domain III) on 2 adjacent RuvB subunits; this complex drives branch migration. In the full resolvosome a probable DNA-RuvA(4)-RuvB(12)-RuvC(2) complex forms which resolves the HJ.

It is found in the cytoplasm. Functionally, the RuvA-RuvB-RuvC complex processes Holliday junction (HJ) DNA during genetic recombination and DNA repair, while the RuvA-RuvB complex plays an important role in the rescue of blocked DNA replication forks via replication fork reversal (RFR). RuvA specifically binds to HJ cruciform DNA, conferring on it an open structure. The RuvB hexamer acts as an ATP-dependent pump, pulling dsDNA into and through the RuvAB complex. HJ branch migration allows RuvC to scan DNA until it finds its consensus sequence, where it cleaves and resolves the cruciform DNA. The sequence is that of Holliday junction branch migration complex subunit RuvA from Orientia tsutsugamushi (strain Ikeda) (Rickettsia tsutsugamushi).